We begin with the raw amino-acid sequence, 94 residues long: Small ribosomal subunit protein bS18 (94 aa).

It belongs to the bacterial ribosomal protein bS18 family. As to quaternary structure, part of the 30S ribosomal subunit. Forms a tight heterodimer with protein bS6.

Functionally, binds as a heterodimer with protein bS6 to the central domain of the 16S rRNA, where it helps stabilize the platform of the 30S subunit. The chain is Small ribosomal subunit protein bS18 from Acetivibrio thermocellus (strain ATCC 27405 / DSM 1237 / JCM 9322 / NBRC 103400 / NCIMB 10682 / NRRL B-4536 / VPI 7372) (Clostridium thermocellum).